A 523-amino-acid polypeptide reads, in one-letter code: Transcription factor MYB120 (523 aa).

HTH myb-type domains are found at residues 23 to 75 (GVIL…ANHL) and 76 to 130 (RPNL…KRLL). DNA-binding regions (H-T-H motif) lie at residues 51–75 (WNAV…ANHL) and 103–126 (WARM…NTRL). 4 disordered regions span residues 140 to 254 (DIIP…YPTL), 332 to 373 (QTAT…SHYT), 396 to 426 (QIPQ…GAHR), and 444 to 470 (LASG…NNTN). Positions 147-167 (LHPHPHHQQQQQHNHHHHHHQ) are enriched in basic residues. Residues 175-185 (MYFQPQSSQRN) are compositionally biased toward polar residues. Low complexity-rich tracts occupy residues 202-212 (SSSSFTFHTTT), 223-232 (TPNTPSQLSS), and 341-368 (NPYS…PSFL). Polar residues predominate over residues 396 to 410 (QIPQIDGFNNVNNFT).

In terms of tissue distribution, expressed in pollen grains and pollen tube. Mostly expressed in mature pollen grains, and, to a lower extent, in inflorescences and siliques.

The protein localises to the nucleus. Transcription activator. Binds to 5'-CAACTGTC-3' and/or 5'-TAACAAA-3' motif in target gene promoter to promote their expression. Together with MYB97 and MYB101, functions as a male factor that controls pollen tube-synergid interaction in fertilization. Required for pollen tube growth arrest and sperm cell release in the female gametophyte, probably via the regulation of pollen tube-specific gene expression. This is Transcription factor MYB120 from Arabidopsis thaliana (Mouse-ear cress).